The chain runs to 393 residues: Formate-dependent phosphoribosylglycinamide formyltransferase (393 aa).

Residues E22–L23 and E82 contribute to the N(1)-(5-phospho-beta-D-ribosyl)glycinamide site. ATP is bound by residues R114, K155, S160–Q165, E195–V198, and E203. The ATP-grasp domain occupies R119–L308. Positions 267 and 279 each coordinate Mg(2+). N(1)-(5-phospho-beta-D-ribosyl)glycinamide contacts are provided by residues D286, K356, and R363 to R364.

This sequence belongs to the PurK/PurT family. As to quaternary structure, homodimer.

The catalysed reaction is N(1)-(5-phospho-beta-D-ribosyl)glycinamide + formate + ATP = N(2)-formyl-N(1)-(5-phospho-beta-D-ribosyl)glycinamide + ADP + phosphate + H(+). Its pathway is purine metabolism; IMP biosynthesis via de novo pathway; N(2)-formyl-N(1)-(5-phospho-D-ribosyl)glycinamide from N(1)-(5-phospho-D-ribosyl)glycinamide (formate route): step 1/1. Involved in the de novo purine biosynthesis. Catalyzes the transfer of formate to 5-phospho-ribosyl-glycinamide (GAR), producing 5-phospho-ribosyl-N-formylglycinamide (FGAR). Formate is provided by PurU via hydrolysis of 10-formyl-tetrahydrofolate. This Pasteurella multocida (strain Pm70) protein is Formate-dependent phosphoribosylglycinamide formyltransferase.